A 177-amino-acid chain; its full sequence is MIDDDGYRPNVGIVICNRQGQVMWARRYGQHSWQFPQGGINPGESAEQAMYRELFEEVGLRKKDVRVLASTRNWLRYKLPKRLVRWDTKPVCIGQKQKWFLLQLMCNESDINMQSSGTPEFDGWRWVSYWYPVRQVVSFKRDVYRRVMKEFINPVILLQESVAARVATPSGPRRKRG.

The Nudix hydrolase domain occupies 6–149 (GYRPNVGIVI…KRDVYRRVMK (144 aa)). The short motif at 38 to 59 (GGINPGESAEQAMYRELFEEVG) is the Nudix box element.

It belongs to the Nudix hydrolase family. RppH subfamily. A divalent metal cation serves as cofactor.

Accelerates the degradation of transcripts by removing pyrophosphate from the 5'-end of triphosphorylated RNA, leading to a more labile monophosphorylated state that can stimulate subsequent ribonuclease cleavage. This is RNA pyrophosphohydrolase from Pectobacterium carotovorum subsp. carotovorum (strain PC1).